The sequence spans 1093 residues: Electroneutral sodium bicarbonate exchanger 1 (1093 aa).

Disordered regions lie at residues 1-25 and 55-95; these read MPAA…AVVD and PLGR…HDTP. Topologically, residues 1–478 are extracellular; sequence MPAAGSNEPD…DYRDALSLQC (478 aa). A compositionally biased stretch (basic residues) spans 59 to 77; that stretch reads QSHRHHRTHGQKHRRRGRG. F167 and L169 together coordinate Zn(2+). The VTVLP; mediates dimerization motif lies at 340–344; the sequence is LFILL. Residues 479 to 499 form a helical membrane-spanning segment; sequence LASFLFLYCACMSPVITFGGL. Over 500–523 the chain is Cytoplasmic; it reads LGEATEGRISAIESLFGASMTGIA. Residues 524 to 544 form a helical membrane-spanning segment; the sequence is YSLFAGQALTILGSTGPVLVF. Residues 545–565 are Extracellular-facing; that stretch reads EKILFKFCKDYALSYLSLRAC. The chain crosses the membrane as a helical span at residues 566 to 586; the sequence is IGLWTAFLCIVLVATDASSLV. The Cytoplasmic segment spans residues 587–595; that stretch reads CYITRFTEE. The helical transmembrane segment at 596–616 threads the bilayer; the sequence is AFASLICIIFIYEAIEKLIHL. The Extracellular segment spans residues 617–687; that stretch reads AETYPIHMHS…EFMGSACGHH (71 aa). 2 disulfide bridges follow: C636–C684 and C638–C672. An N-linked (GlcNAc) asparagine glycan is attached at N646. The helical transmembrane segment at 688-708 threads the bilayer; sequence GPYTPDVLFWSCILFFTTFIL. The Cytoplasmic portion of the chain corresponds to 709–731; the sequence is SSTLKTFKTSRYFPTRVRSMVSD. A helical transmembrane segment spans residues 732–752; sequence FAVFLTIFTMVIIDFLIGVPS. Over 753 to 778 the chain is Extracellular; it reads PKLQVPSVFKPTRDDRGWIINPIGPN. Residues 779–799 traverse the membrane as a helical segment; the sequence is PWWTVIAAIIPALLCTILIFM. At 800-824 the chain is on the cytoplasmic side; it reads DQQITAVIINRKEHKLKKGCGYHLD. A helical membrane pass occupies residues 825–845; it reads LLMVAIMLGVCSIMGLPWFVA. The Extracellular portion of the chain corresponds to 846-881; that stretch reads ATVLSITHVNSLKLESECSAPGEQPKFLGIREQRVT. A helical membrane pass occupies residues 882–902; sequence GLMIFVLMGCSVFMTAILKFI. Over 903 to 904 the chain is Cytoplasmic; sequence PM. Residues 905-925 traverse the membrane as a helical segment; the sequence is PVLYGVFLYMGVSSLQGIQFF. The Extracellular portion of the chain corresponds to 926-962; that stretch reads DRLKLFGMPAKHQPDFIYLRHVPLRKVHLFTLIQLTC. A helical transmembrane segment spans residues 963–983; the sequence is LVLLWVIKASPAAIVFPMMVL. The Cytoplasmic portion of the chain corresponds to 984 to 1093; the sequence is ALVFVRKVMD…GNAKEKSLFN (110 aa). Residues 1010-1036 are a coiled coil; sequence ESKKKKLDDAKKKAKEEEEAEKMLEIG.

This sequence belongs to the anion exchanger (TC 2.A.31) family. As to quaternary structure, homodimer. As to expression, expressed in the pyramidal cells of the hippocampus (at protein level). Highly expressed in all major regions of the brain, spinal column and in testis, and moderate levels in trachea, thyroid and medulla region of kidney. Low expression levels observed in pancreas and kidney cortex. In terms of tissue distribution, expressed in the brain. Expressed in the brain, heart and kidney.

It is found in the apical cell membrane. It localises to the basolateral cell membrane. The protein resides in the cytoplasmic vesicle. The protein localises to the secretory vesicle. Its subcellular location is the synaptic vesicle membrane. It is found in the cell membrane. The catalysed reaction is 2 hydrogencarbonate(out) + chloride(in) + Na(+)(out) = 2 hydrogencarbonate(in) + chloride(out) + Na(+)(in). Activity is inhibited by 4,4'-Di-isothiocyanatostilbene-2,2'-disulfonic acid (DIDS - an inhibitor of several anion channels and transporters). Its activity is regulated as follows. Activity is inhibited by 4,4'-Di-isothiocyanatostilbene-2,2'-disulfonic acid (DIDS - an inhibitor of several anion channels and transporters). Zinc-binding negatively regulates its activity. Mediates electroneutral sodium- and carbonate-dependent chloride-HCO3(-) exchange with a Na(+):HCO3(-) stoichiometry of 2:1. Plays a major role in pH regulation in neurons. Mediates sodium reabsorption in the renal cortical collecting ducts. The protein is Electroneutral sodium bicarbonate exchanger 1 of Homo sapiens (Human).